The chain runs to 1113 residues: Myosin-binding protein 1 (1113 aa).

The chain crosses the membrane as a helical span at residues 12-34 (LAFNEWLLMFMLFVNSIFSYVIA). The disordered stretch occupies residues 209 to 229 (ESEAVFSDTEPKQESSLNHLP). A GTD-binding domain is found at 888–986 (SEGDRLKRQV…DLEAEIEYFR (99 aa)).

Interacts with myosin XI-K, XI-I and XI-1. As to expression, expressed in leaf epidermal cells, roots and root hairs.

The protein resides in the endomembrane system. In terms of biological role, membrane-anchored myosin receptors that define a distinct, plant-specific transport vesicle compartment. In Arabidopsis thaliana (Mouse-ear cress), this protein is Myosin-binding protein 1.